The following is a 458-amino-acid chain: MSSGRIVQIIGAVIDVEFPRDVVPSVYNALKVQGAETTLEVQQQLGDGVVRTIAMGSTEGLKRGLDVVDTGAAISVPVGKATLGRIMDVLGNPIDEAGPIGEEERRGIHQPAPSFADQAGGNDLLETGIKVIDLVCPFAKGGKVGLFGGAGVGKTVNMMELIRNIAMEHSGYSVFAGVGERTREGNDFYHEMKDSNVLDKVALVYGQMNEPPGNRLRVALTGLTMAEKFRDEGNDVLLFVDNIYRYTLAGTEVSALLGRMPSAVGYQPTLAEEMGVLQERITSTKEGSITSVQAVYVPADDLTDPSPATTFAHLDATVVLSRDIASLGIYPAVDPLDSTSRQLDPNVIGNEHYETARGVQYVLQRYKELKDIIAILGMDELSEADKQLVARARKIQRFLSQPFFVAEVFTGSPGKYVSLKDTIAGFSGILKGDYDHLPEQAFYMVGSIDEAIEKAKKL.

148 to 155 (GGAGVGKT) provides a ligand contact to ATP.

It belongs to the ATPase alpha/beta chains family. As to quaternary structure, F-type ATPases have 2 components, CF(1) - the catalytic core - and CF(0) - the membrane proton channel. CF(1) has five subunits: alpha(3), beta(3), gamma(1), delta(1), epsilon(1). CF(0) has three main subunits: a(1), b(2) and c(9-12). The alpha and beta chains form an alternating ring which encloses part of the gamma chain. CF(1) is attached to CF(0) by a central stalk formed by the gamma and epsilon chains, while a peripheral stalk is formed by the delta and b chains.

The protein resides in the cell inner membrane. It catalyses the reaction ATP + H2O + 4 H(+)(in) = ADP + phosphate + 5 H(+)(out). Its function is as follows. Produces ATP from ADP in the presence of a proton gradient across the membrane. The catalytic sites are hosted primarily by the beta subunits. The sequence is that of ATP synthase subunit beta from Pseudomonas putida (strain ATCC 700007 / DSM 6899 / JCM 31910 / BCRC 17059 / LMG 24140 / F1).